The sequence spans 459 residues: Mitochondrial distribution and morphology protein 10 (459 aa).

It belongs to the MDM10 family. As to quaternary structure, component of the ER-mitochondria encounter structure (ERMES) or MDM complex, composed of mmm1, mdm10, mdm12 and mdm34. Associates with the mitochondrial outer membrane sorting assembly machinery SAM(core) complex.

Its subcellular location is the mitochondrion outer membrane. In terms of biological role, component of the ERMES/MDM complex, which serves as a molecular tether to connect the endoplasmic reticulum and mitochondria. Components of this complex are involved in the control of mitochondrial shape and protein biogenesis and may function in phospholipid exchange. mdm10 is involved in the late assembly steps of the general translocase of the mitochondrial outer membrane (TOM complex). Functions in the tom40-specific route of the assembly of outer membrane beta-barrel proteins, including the association of tom40 with the receptor tom22 and small TOM proteins. Can associate with the SAM(core) complex as well as the mdm12-mmm1 complex, both involved in late steps of the major beta-barrel assembly pathway, that is responsible for biogenesis of all outer membrane beta-barrel proteins. May act as a switch that shuttles between both complexes and channels precursor proteins into the tom40-specific pathway. Plays a role in mitochondrial morphology and in the inheritance of mitochondria. This chain is Mitochondrial distribution and morphology protein 10 (mdmB), found in Aspergillus terreus (strain NIH 2624 / FGSC A1156).